Here is a 206-residue protein sequence, read N- to C-terminus: ATP synthase subunit b (206 aa).

Residues 10–30 form a helical membrane-spanning segment; it reads LLKPFVSTAAICLLVAGTVVL.

This sequence belongs to the ATPase B chain family. As to quaternary structure, F-type ATPases have 2 components, F(1) - the catalytic core - and F(0) - the membrane proton channel. F(1) has five subunits: alpha(3), beta(3), gamma(1), delta(1), epsilon(1). F(0) has three main subunits: a(1), b(2) and c(10-14). The alpha and beta chains form an alternating ring which encloses part of the gamma chain. F(1) is attached to F(0) by a central stalk formed by the gamma and epsilon chains, while a peripheral stalk is formed by the delta and b chains.

Its subcellular location is the cell inner membrane. F(1)F(0) ATP synthase produces ATP from ADP in the presence of a proton or sodium gradient. F-type ATPases consist of two structural domains, F(1) containing the extramembraneous catalytic core and F(0) containing the membrane proton channel, linked together by a central stalk and a peripheral stalk. During catalysis, ATP synthesis in the catalytic domain of F(1) is coupled via a rotary mechanism of the central stalk subunits to proton translocation. In terms of biological role, component of the F(0) channel, it forms part of the peripheral stalk, linking F(1) to F(0). The chain is ATP synthase subunit b from Geobacter sulfurreducens (strain ATCC 51573 / DSM 12127 / PCA).